The following is a 516-amino-acid chain: D-alanine--D-alanyl carrier protein ligase (516 aa).

156–157 (TS) is an ATP binding site. Residue Asp203 coordinates D-alanine. 298–303 (NAYGPT) is a binding site for ATP. Val307 lines the D-alanine pocket. Residues Asp389, 401 to 404 (YGGR), and Lys503 each bind ATP. Position 503 (Lys503) interacts with D-alanine.

This sequence belongs to the ATP-dependent AMP-binding enzyme family. DltA subfamily.

It localises to the cytoplasm. It carries out the reaction holo-[D-alanyl-carrier protein] + D-alanine + ATP = D-alanyl-[D-alanyl-carrier protein] + AMP + diphosphate. It participates in cell wall biogenesis; lipoteichoic acid biosynthesis. Catalyzes the first step in the D-alanylation of lipoteichoic acid (LTA), the activation of D-alanine and its transfer onto the D-alanyl carrier protein (Dcp) DltC. In an ATP-dependent two-step reaction, forms a high energy D-alanyl-AMP intermediate, followed by transfer of the D-alanyl residue as a thiol ester to the phosphopantheinyl prosthetic group of the Dcp. D-alanylation of LTA plays an important role in modulating the properties of the cell wall in Gram-positive bacteria, influencing the net charge of the cell wall. The polypeptide is D-alanine--D-alanyl carrier protein ligase (Streptococcus pneumoniae serotype 4 (strain ATCC BAA-334 / TIGR4)).